A 553-amino-acid chain; its full sequence is Cytokine-like nuclear factor N-PAC (553 aa).

The 59-residue stretch at 8–66 folds into the PWWP domain; sequence LGDLVWGKLGRYPPWPGKIVNPPKDLKKPRGKKCFFVKFFGTEDHAWIKVEQLKPYHAH. Basic and acidic residues-rich tracts occupy residues 92 to 145 and 162 to 182; these read RAKG…EGKK and RAQEQSPRKRGRPPKDEKDLS. The interval 92 to 190 is disordered; it reads RAKGKDQTSS…LSIPESSTVK (99 aa). S130 is subject to Phosphoserine. Residue K135 forms a Glycyl lysine isopeptide (Lys-Gly) (interchain with G-Cter in SUMO2) linkage. S167 bears the Phosphoserine mark. A DNA-binding region (a.T hook) is located at residues 168 to 180; the sequence is PRKRGRPPKDEKD. Residues K176, K179, K201, and K211 each participate in a glycyl lysine isopeptide (Lys-Gly) (interchain with G-Cter in SUMO2) cross-link. The interval 214–217 is interaction with histone H3; that stretch reads DPHF. An interaction with KDM1B region spans residues 216-225; it reads HFHHFLLSQT. Glycyl lysine isopeptide (Lys-Gly) (interchain with G-Cter in SUMO2) cross-links involve residues K227, K237, K240, and K269. Residues 261-553 form a dehydrogenase domain region; it reads GSVTPTDKKI…MSAVYRAYIH (293 aa). 271–285 provides a ligand contact to NAD(+); sequence GFLGLGLMGSGIVSN. K302 is covalently cross-linked (Glycyl lysine isopeptide (Lys-Gly) (interchain with G-Cter in SUMO2)). Positions 362 and 505 each coordinate NAD(+). S540 is subject to Phosphoserine.

It belongs to the HIBADH-related family. NP60 subfamily. As to quaternary structure, homotetramere. Interacts with MAPK14. Interacts with KDM1B at nucleosomes; this interaction stimulates H3K4me1 and H3K4me2 demethylation. Binds to mononucleosomes. Interacts with GATA4; the interaction is required for a synergistic activation of GATA4 target genes transcription.

Its subcellular location is the nucleus. It localises to the chromosome. Cytokine-like nuclear factor with chromatin gene reader activity involved in chromatin modification and regulation of gene expression. Acts as a nucleosome-destabilizing factor that is recruited to genes during transcriptional activation. Recognizes and binds histone H3 without a preference for specific epigenetic markers and also binds DNA. Interacts with KDM1B and promotes its histone demethylase activity by facilitating the capture of H3 tails, they form a multifunctional enzyme complex that modifies transcribed chromatin and facilitates Pol II transcription through nucleosomes. Stimulates the acetylation of 'Lys-56' of nucleosomal histone H3 (H3K56ac) by EP300. With GATA4, co-binds a defined set of heart development genes and coregulates their expression during cardiomyocyte differentiation. Regulates p38 MAP kinase activity by mediating stress activation of MAPK14/p38alpha and specifically regulating MAPK14 signaling. Indirectly promotes phosphorylation of MAPK14 and activation of ATF2. The phosphorylation of MAPK14 requires upstream activity of MAP2K4 and MAP2K6. The sequence is that of Cytokine-like nuclear factor N-PAC (GLYR1) from Bos taurus (Bovine).